Consider the following 293-residue polypeptide: Ribosomal protein L11 methyltransferase (293 aa).

Residues Thr145, Gly166, Asp188, and Asn230 each coordinate S-adenosyl-L-methionine.

It belongs to the methyltransferase superfamily. PrmA family.

The protein localises to the cytoplasm. The enzyme catalyses L-lysyl-[protein] + 3 S-adenosyl-L-methionine = N(6),N(6),N(6)-trimethyl-L-lysyl-[protein] + 3 S-adenosyl-L-homocysteine + 3 H(+). Functionally, methylates ribosomal protein L11. The chain is Ribosomal protein L11 methyltransferase from Escherichia coli O81 (strain ED1a).